A 105-amino-acid chain; its full sequence is Antithrombin-III (105 aa).

The first 17 residues, 1-17 (MHLFIGVSLRPLGHGIP), serve as a signal peptide directing secretion. The tract at residues 38-105 (ICIYRNPEKK…MRRTSSCRPS (68 aa)) is disordered. Basic and acidic residues predominate over residues 43 to 53 (NPEKKPQERRG).

Belongs to the serpin family. As to quaternary structure, forms protease inhibiting heterodimer with TMPRSS7. In terms of tissue distribution, plasma.

It is found in the secreted. The protein localises to the extracellular space. Most important serine protease inhibitor in plasma that regulates the blood coagulation cascade. AT-III inhibits thrombin, matriptase-3/TMPRSS7, as well as factors IXa, Xa and XIa. Its inhibitory activity is greatly enhanced in the presence of heparin. In Gallus gallus (Chicken), this protein is Antithrombin-III (SERPINC1).